Reading from the N-terminus, the 261-residue chain is Cytochrome c oxidase subunit 3 (261 aa).

The Mitochondrial matrix segment spans residues 1 to 15; the sequence is MTHQTHAYHMVNPSP. A helical transmembrane segment spans residues 16-34; that stretch reads WPLTGALSALLMTSGLIMW. Residues 35–40 are Mitochondrial intermembrane-facing; sequence FHFNST. The helical transmembrane segment at 41–66 threads the bilayer; that stretch reads TLLMLGLTTNMLTMYQWWRDVVREST. At 67 to 72 the chain is on the mitochondrial matrix side; the sequence is FQGHHT. Residues 73 to 105 traverse the membrane as a helical segment; the sequence is PNVQKGLRYGMILFIISEVLFFTGFFWAFYHSS. Residues 106–128 lie on the Mitochondrial intermembrane side of the membrane; that stretch reads LAPTPELGGCWPPTGIHPLNPLE. Residues 129–152 form a helical membrane-spanning segment; the sequence is VPLLNTSVLLASGVSITWAHHSLM. The Mitochondrial matrix portion of the chain corresponds to 153-155; the sequence is EGN. Residues 156–183 form a helical membrane-spanning segment; that stretch reads RNHMLQALFITIALGVYFTLLQASEYYE. At 184-190 the chain is on the mitochondrial intermembrane side; that stretch reads APFTISD. A helical transmembrane segment spans residues 191–223; the sequence is GVYGSTFFVATGFHGLHVIIGSTFLIVCFFRQL. Residues 224–232 lie on the Mitochondrial matrix side of the membrane; it reads KFHFTSSHH. The chain crosses the membrane as a helical span at residues 233–256; the sequence is FGFEAAAWYWHFVDVVWLFLYVSI. Residues 257–261 lie on the Mitochondrial intermembrane side of the membrane; it reads YWWGS.

Belongs to the cytochrome c oxidase subunit 3 family. Component of the cytochrome c oxidase (complex IV, CIV), a multisubunit enzyme composed of 14 subunits. The complex is composed of a catalytic core of 3 subunits MT-CO1, MT-CO2 and MT-CO3, encoded in the mitochondrial DNA, and 11 supernumerary subunits COX4I, COX5A, COX5B, COX6A, COX6B, COX6C, COX7A, COX7B, COX7C, COX8 and NDUFA4, which are encoded in the nuclear genome. The complex exists as a monomer or a dimer and forms supercomplexes (SCs) in the inner mitochondrial membrane with NADH-ubiquinone oxidoreductase (complex I, CI) and ubiquinol-cytochrome c oxidoreductase (cytochrome b-c1 complex, complex III, CIII), resulting in different assemblies (supercomplex SCI(1)III(2)IV(1) and megacomplex MCI(2)III(2)IV(2)).

The protein resides in the mitochondrion inner membrane. The enzyme catalyses 4 Fe(II)-[cytochrome c] + O2 + 8 H(+)(in) = 4 Fe(III)-[cytochrome c] + 2 H2O + 4 H(+)(out). In terms of biological role, component of the cytochrome c oxidase, the last enzyme in the mitochondrial electron transport chain which drives oxidative phosphorylation. The respiratory chain contains 3 multisubunit complexes succinate dehydrogenase (complex II, CII), ubiquinol-cytochrome c oxidoreductase (cytochrome b-c1 complex, complex III, CIII) and cytochrome c oxidase (complex IV, CIV), that cooperate to transfer electrons derived from NADH and succinate to molecular oxygen, creating an electrochemical gradient over the inner membrane that drives transmembrane transport and the ATP synthase. Cytochrome c oxidase is the component of the respiratory chain that catalyzes the reduction of oxygen to water. Electrons originating from reduced cytochrome c in the intermembrane space (IMS) are transferred via the dinuclear copper A center (CU(A)) of subunit 2 and heme A of subunit 1 to the active site in subunit 1, a binuclear center (BNC) formed by heme A3 and copper B (CU(B)). The BNC reduces molecular oxygen to 2 water molecules using 4 electrons from cytochrome c in the IMS and 4 protons from the mitochondrial matrix. This is Cytochrome c oxidase subunit 3 (MT-CO3) from Gazella spekei (Speke's gazelle).